The primary structure comprises 2604 residues: BEACH domain-containing protein B (2604 aa).

The region spanning 1761–1912 (VGTSEVLTSV…NAKEVGMLIV (152 aa)) is the BEACH-type PH domain. The BEACH domain occupies 1936–2226 (DRRIAMEMAE…QIFRKKHPRR (291 aa)). 6 WD repeats span residues 2254 to 2293 (HSPS…SGGN), 2368 to 2407 (HHKD…TPEK), 2433 to 2474 (GHDD…RSLK), 2476 to 2515 (PSGS…LASS), 2516 to 2557 (ESNG…KRYN), and 2558 to 2596 (GAGK…HRKP).

Functionally, may be involved in the suppression of BCHC1 activity. This is BEACH domain-containing protein B from Arabidopsis thaliana (Mouse-ear cress).